A 272-amino-acid chain; its full sequence is Ethanolamine ammonia-lyase small subunit (272 aa).

Residues Val161, Glu182, and Cys211 each coordinate adenosylcob(III)alamin.

The protein belongs to the EutC family. The basic unit is a heterodimer which dimerizes to form tetramers. The heterotetramers trimerize; 6 large subunits form a core ring with 6 small subunits projecting outwards. The cofactor is adenosylcob(III)alamin.

Its subcellular location is the bacterial microcompartment. It carries out the reaction ethanolamine = acetaldehyde + NH4(+). It participates in amine and polyamine degradation; ethanolamine degradation. Functionally, catalyzes the deamination of various vicinal amino-alcohols to oxo compounds. Allows this organism to utilize ethanolamine as the sole source of nitrogen and carbon in the presence of external vitamin B12. The sequence is that of Ethanolamine ammonia-lyase small subunit from Pseudomonas putida (strain ATCC 47054 / DSM 6125 / CFBP 8728 / NCIMB 11950 / KT2440).